The sequence spans 178 residues: Nucleoplasmin-3 (178 aa).

Alanine 2 is modified (N-acetylalanine). A phosphoserine mark is found at serine 13 and serine 16. Arginine 27 is subject to Omega-N-methylarginine. The tract at residues 141–178 (TMSNDVSEEESEEEEEDSDEEEVELCPILPAKKQGGRP) is disordered. Positions 146–164 (VSEEESEEEEEDSDEEEVE) are enriched in acidic residues. Residues serine 147, serine 151, and serine 158 each carry the phosphoserine modification.

This sequence belongs to the nucleoplasmin family. As to quaternary structure, interacts with NPM (via N-terminus). Forms a pentamer with NPM at a ratio 4:1 (NPM3/NPM). Two pentamers form a decamer. In terms of processing, phosphorylated. In terms of tissue distribution, ubiquitous.

It is found in the nucleus. Its subcellular location is the nucleolus. Plays a role in the regulation of diverse cellular processes such as ribosome biogenesis, chromatin remodeling or protein chaperoning. Modulates the histone chaperone function and the RNA-binding activity of nucleolar phosphoprotein B23/NPM. Efficiently mediates chromatin remodeling when included in a pentamer containing NPM3 and NPM. This is Nucleoplasmin-3 (NPM3) from Homo sapiens (Human).